The sequence spans 903 residues: Valine--tRNA ligase (903 aa).

The segment covering 1-15 (MVCVTDQNNETTSQN) has biased composition (polar residues). The tract at residues 1–21 (MVCVTDQNNETTSQNRADKLP) is disordered. The 'HIGH' region signature appears at 61 to 71 (PNVTGQLHMGH). A 'KMSKS' region motif is present at residues 552 to 556 (KMSKS). K555 lines the ATP pocket. Positions 836–903 (TVDVAAERKR…RINKRLEELA (68 aa)) form a coiled coil.

Belongs to the class-I aminoacyl-tRNA synthetase family. ValS type 1 subfamily. Monomer.

The protein localises to the cytoplasm. The catalysed reaction is tRNA(Val) + L-valine + ATP = L-valyl-tRNA(Val) + AMP + diphosphate. Catalyzes the attachment of valine to tRNA(Val). As ValRS can inadvertently accommodate and process structurally similar amino acids such as threonine, to avoid such errors, it has a 'posttransfer' editing activity that hydrolyzes mischarged Thr-tRNA(Val) in a tRNA-dependent manner. The protein is Valine--tRNA ligase of Corynebacterium glutamicum (strain ATCC 13032 / DSM 20300 / JCM 1318 / BCRC 11384 / CCUG 27702 / LMG 3730 / NBRC 12168 / NCIMB 10025 / NRRL B-2784 / 534).